Reading from the N-terminus, the 69-residue chain is Guanine nucleotide-binding protein subunit gamma (69 aa).

N-acetylserine is present on S2. C66 carries the cysteine methyl ester modification. Residue C66 is the site of S-geranylgeranyl cysteine attachment. Positions 67 to 69 (SVL) are cleaved as a propeptide — removed in mature form.

The protein belongs to the G protein gamma family. As to quaternary structure, g proteins are composed of 3 units, alpha, beta and gamma. Interacts with gpbA, and this requires phlp1. This protein is thought to be subject to lipidation, and this requires phlp1.

The protein resides in the cell membrane. In terms of biological role, guanine nucleotide-binding proteins (G proteins) are involved as a modulator or transducer in various transmembrane signaling systems. This major G-protein of the squid photoreceptor is involved in visual transduction. The beta and gamma chains are required for the GTPase activity, for replacement of GDP by GTP, and for G protein-effector interaction. Required for normal chemotaxis in response to cAMP. This Dictyostelium discoideum (Social amoeba) protein is Guanine nucleotide-binding protein subunit gamma (gpgA).